The primary structure comprises 104 residues: Large ribosomal subunit protein uL24 (104 aa).

This sequence belongs to the universal ribosomal protein uL24 family. Part of the 50S ribosomal subunit.

Functionally, one of two assembly initiator proteins, it binds directly to the 5'-end of the 23S rRNA, where it nucleates assembly of the 50S subunit. One of the proteins that surrounds the polypeptide exit tunnel on the outside of the subunit. This chain is Large ribosomal subunit protein uL24, found in Corynebacterium diphtheriae (strain ATCC 700971 / NCTC 13129 / Biotype gravis).